Here is a 211-residue protein sequence, read N- to C-terminus: Peptidyl-prolyl cis-trans isomerase FKBP14 (211 aa).

An N-terminal signal peptide occupies residues Met-1 to Gly-19. An intrachain disulfide couples Cys-38 to Cys-96. A PPIase FKBP-type domain is found at Gly-45–Arg-135. Positions Arg-135–Lys-170 constitute an EF-hand 1 domain. Positions 148, 150, 152, 154, and 159 each coordinate Ca(2+). Asn-176 is a glycosylation site (N-linked (GlcNAc...) asparagine). The EF-hand 2 domain maps to His-179–Leu-211. Positions 192, 194, 196, 198, and 203 each coordinate Ca(2+). Residues His-208 to Leu-211 carry the Prevents secretion from ER motif.

Monomer. Homodimer. Interacts with type III, type IV and type X collagens.

Its subcellular location is the endoplasmic reticulum lumen. The enzyme catalyses [protein]-peptidylproline (omega=180) = [protein]-peptidylproline (omega=0). Inhibited by tacrolimus/FK506. In terms of biological role, PPIase which accelerates the folding of proteins during protein synthesis. Has a preference for substrates containing 4-hydroxylproline modifications, including type III collagen. May also target type VI and type X collagens. The sequence is that of Peptidyl-prolyl cis-trans isomerase FKBP14 (FKBP14) from Homo sapiens (Human).